The primary structure comprises 237 residues: BTB/POZ domain-containing protein KCTD6 (237 aa).

The interval 1–104 (MDNGDWGYMM…FYQIEPLIQC (104 aa)) is interaction with ANK1 isoform Mu17. The interval 10-110 (MTDPVTLNVG…LIQCLNDPKP (101 aa)) is interaction with CUL3. A BTB domain is found at 12 to 81 (DPVTLNVGGH…LRTSELTLPL (70 aa)). The segment at 113-187 (PMDTFEEVVE…TFGPCDYHQE (75 aa)) is interaction with USP21.

Homopentamer. Interacts with KCTD11; KCTD6 and KCTD11 may associate in pentameric assemblies. Interacts (via BTB domain) with CUL3; initially a 4:4 stoichiometry has been reported, however, electron microscopy revealed pentameric states with a five-pointed pinwheel shape. The interaction with CUL3 is indicative for a participation in a BCR (BTB-CUL3-RBX1) E3 ubiquitin-protein ligase complex. Interacts with HDAC1; probably indirect as the interaction is requires the presence of KCTD11. Interacts with USP21 (preferentially catalytic inactive form). Interacts with ANK1 isoform Mu17; detected in striated muscle. Interacts with USP11. Highly expressed in cerebellum and brain. Expression is down-regulated in medulloblastoma.

Its subcellular location is the cytoplasm. The protein localises to the myofibril. It is found in the sarcomere. The protein resides in the m line. It participates in protein modification; protein ubiquitination. Probable substrate-specific adapter of a BCR (BTB-CUL3-RBX1) E3 ubiquitin-protein ligase complex mediating the ubiquitination and subsequent proteasomal degradation of target proteins. Promotes the ubiquitination of HDAC1; the function seems to depend on KCTD11:KCTD6 oligomerization. Can function as antagonist of the Hedgehog pathway by affecting the nuclear transfer of transcription factor GLI1; the function probably occurs via HDAC1 down-regulation, keeping GLI1 acetylated and inactive. Inhibits cell growth and tumorigenicity of medulloblastoma (MDB). Involved in regulating protein levels of ANK1 isoform Mu17 probably implicating CUL3-dependent proteasomal degradation. The sequence is that of BTB/POZ domain-containing protein KCTD6 (KCTD6) from Homo sapiens (Human).